We begin with the raw amino-acid sequence, 201 residues long: uncharacterized protein (201 aa).

In terms of assembly, interacts with the chaperones HSP82 and HSC82.

This is an uncharacterized protein from Saccharomyces cerevisiae (strain ATCC 204508 / S288c) (Baker's yeast).